A 125-amino-acid chain; its full sequence is Small ribosomal subunit protein uS13 (125 aa).

Residues 93–125 (RKGLPVRGQRTKTNARTRKGPKRTVAGKKKAGR) are disordered.

The protein belongs to the universal ribosomal protein uS13 family. Part of the 30S ribosomal subunit. Forms a loose heterodimer with protein S19. Forms two bridges to the 50S subunit in the 70S ribosome.

Located at the top of the head of the 30S subunit, it contacts several helices of the 16S rRNA. In the 70S ribosome it contacts the 23S rRNA (bridge B1a) and protein L5 of the 50S subunit (bridge B1b), connecting the 2 subunits; these bridges are implicated in subunit movement. Contacts the tRNAs in the A and P-sites. This chain is Small ribosomal subunit protein uS13, found in Paenarthrobacter aurescens (strain TC1).